Reading from the N-terminus, the 286-residue chain is MNQDILHRYLFDNADVRGELVQLQESYQQVLDAQAYPPVLQILLGELMAATSLLTATLKFSGDISVQLQGNGPVSLAVINGNNLQQLRGVARWNGELTDNASLADLFGQGYMVITLTPDEGERYQGVVALDKPTLAACVEEYFNQSEQLPTALWLFANGQQAAGMFLQILPSQEDHHQDFEHLSQLTSTIKAEELFTLDAENVLHRLYHQEEVRLFDPIEVSFKCTCSRERSAAAIKTLEQAEVEAILAEEGKIEMGCEYCNANYVFDGIDITTIFANGQNSNIPQ.

Disulfide bonds link cysteine 225–cysteine 227 and cysteine 258–cysteine 261.

The protein belongs to the HSP33 family. In terms of processing, under oxidizing conditions two disulfide bonds are formed involving the reactive cysteines. Under reducing conditions zinc is bound to the reactive cysteines and the protein is inactive.

It localises to the cytoplasm. Its function is as follows. Redox regulated molecular chaperone. Protects both thermally unfolding and oxidatively damaged proteins from irreversible aggregation. Plays an important role in the bacterial defense system toward oxidative stress. This is 33 kDa chaperonin from Shewanella putrefaciens (strain CN-32 / ATCC BAA-453).